The chain runs to 98 residues: Homeobox protein Ht-En (98 aa).

The homeobox DNA-binding region spans E3–S62. The disordered stretch occupies residues N79–A98. Over residues S81–A98 the composition is skewed to low complexity.

The protein belongs to the engrailed homeobox family. Post-translationally, phosphorylated in the Ser-rich domain.

The protein localises to the nucleus. This protein specifies the body segmentation pattern. This Helobdella triserialis (Leech) protein is Homeobox protein Ht-En (HT-EN).